The sequence spans 527 residues: Probable bifunctional methylthioribulose-1-phosphate dehydratase/enolase-phosphatase E1 (527 aa).

Residues 1-244 are methylthioribulose-1-phosphate dehydratase; it reads MAAAAAPAVA…AIKLHQLGLD (244 aa). Cys-116 is a substrate binding site. Positions 134 and 136 each coordinate Zn(2+). The active-site Proton donor/acceptor; for methylthioribulose-1-phosphate dehydratase activity is Glu-159. His-209 lines the Zn(2+) pocket. The interval 288 to 527 is enolase-phosphatase E1; the sequence is IVLDIEGTTT…FKTINSLSEI (240 aa). Residues Asp-291 and Glu-293 each coordinate Mg(2+). Residues 426-427 and Lys-460 contribute to the substrate site; that span reads SS. Asp-486 contributes to the Mg(2+) binding site.

It in the N-terminal section; belongs to the aldolase class II family. MtnB subfamily. In the C-terminal section; belongs to the HAD-like hydrolase superfamily. MasA/MtnC family. The cofactor is Zn(2+). Mg(2+) serves as cofactor.

It carries out the reaction 5-(methylsulfanyl)-D-ribulose 1-phosphate = 5-methylsulfanyl-2,3-dioxopentyl phosphate + H2O. It catalyses the reaction 5-methylsulfanyl-2,3-dioxopentyl phosphate + H2O = 1,2-dihydroxy-5-(methylsulfanyl)pent-1-en-3-one + phosphate. Its pathway is amino-acid biosynthesis; L-methionine biosynthesis via salvage pathway; L-methionine from S-methyl-5-thio-alpha-D-ribose 1-phosphate: step 2/6. It functions in the pathway amino-acid biosynthesis; L-methionine biosynthesis via salvage pathway; L-methionine from S-methyl-5-thio-alpha-D-ribose 1-phosphate: step 3/6. It participates in amino-acid biosynthesis; L-methionine biosynthesis via salvage pathway; L-methionine from S-methyl-5-thio-alpha-D-ribose 1-phosphate: step 4/6. In Ricinus communis (Castor bean), this protein is Probable bifunctional methylthioribulose-1-phosphate dehydratase/enolase-phosphatase E1.